Consider the following 198-residue polypeptide: uncharacterized protein (198 aa).

The interval 72–95 (ESEEQYDSDDDNDKLVLNDDEDDE) is disordered. Residues 75–94 (EQYDSDDDNDKLVLNDDEDD) show a composition bias toward acidic residues. Residues 106–136 (EATNITNINKNIENIKNDMSNLNNMNDSNQK) are a coiled coil.

This is an uncharacterized protein from Plasmodium falciparum (isolate 3D7).